The primary structure comprises 550 residues: CTP synthase (550 aa).

The interval 1–272 is amidoligase domain; sequence MKTKFIFITG…DQKITSFLNL (272 aa). Ser14 is a CTP binding site. Position 14 (Ser14) interacts with UTP. 15 to 20 lines the ATP pocket; that stretch reads SLGKGL. Residue Tyr55 participates in L-glutamine binding. An ATP-binding site is contributed by Asp72. Residues Asp72 and Glu146 each coordinate Mg(2+). Residues 153-155, 193-198, and Lys229 each bind CTP; these read DIE and KTKPTQ. UTP contacts are provided by residues 193–198 and Lys229; that span reads KTKPTQ. A Glutamine amidotransferase type-1 domain is found at 297–550; that stretch reads TITIVGKYVG…IHAACNHNKQ (254 aa). Gly359 contacts L-glutamine. The active-site Nucleophile; for glutamine hydrolysis is Cys386. L-glutamine contacts are provided by residues 387 to 390, Glu410, and Arg478; that span reads LGMQ. Residues His523 and Glu525 contribute to the active site.

The protein belongs to the CTP synthase family. As to quaternary structure, homotetramer.

The enzyme catalyses UTP + L-glutamine + ATP + H2O = CTP + L-glutamate + ADP + phosphate + 2 H(+). It carries out the reaction L-glutamine + H2O = L-glutamate + NH4(+). The catalysed reaction is UTP + NH4(+) + ATP = CTP + ADP + phosphate + 2 H(+). It functions in the pathway pyrimidine metabolism; CTP biosynthesis via de novo pathway; CTP from UDP: step 2/2. With respect to regulation, allosterically activated by GTP, when glutamine is the substrate; GTP has no effect on the reaction when ammonia is the substrate. The allosteric effector GTP functions by stabilizing the protein conformation that binds the tetrahedral intermediate(s) formed during glutamine hydrolysis. Inhibited by the product CTP, via allosteric rather than competitive inhibition. Functionally, catalyzes the ATP-dependent amination of UTP to CTP with either L-glutamine or ammonia as the source of nitrogen. Regulates intracellular CTP levels through interactions with the four ribonucleotide triphosphates. In Lawsonia intracellularis (strain PHE/MN1-00), this protein is CTP synthase.